Consider the following 349-residue polypeptide: S-adenosylmethionine:tRNA ribosyltransferase-isomerase (349 aa).

Belongs to the QueA family. Monomer.

Its subcellular location is the cytoplasm. The enzyme catalyses 7-aminomethyl-7-carbaguanosine(34) in tRNA + S-adenosyl-L-methionine = epoxyqueuosine(34) in tRNA + adenine + L-methionine + 2 H(+). The protein operates within tRNA modification; tRNA-queuosine biosynthesis. In terms of biological role, transfers and isomerizes the ribose moiety from AdoMet to the 7-aminomethyl group of 7-deazaguanine (preQ1-tRNA) to give epoxyqueuosine (oQ-tRNA). In Parabacteroides distasonis (strain ATCC 8503 / DSM 20701 / CIP 104284 / JCM 5825 / NCTC 11152), this protein is S-adenosylmethionine:tRNA ribosyltransferase-isomerase.